We begin with the raw amino-acid sequence, 209 residues long: Chloramphenicol acetyltransferase (209 aa).

His-189 serves as the catalytic Proton acceptor.

It belongs to the chloramphenicol acetyltransferase family. As to quaternary structure, homotrimer.

It catalyses the reaction chloramphenicol + acetyl-CoA = chloramphenicol 3-acetate + CoA. This enzyme is an effector of chloramphenicol resistance in bacteria. The protein is Chloramphenicol acetyltransferase of Staphylococcus aureus.